A 399-amino-acid chain; its full sequence is S-adenosylmethionine synthase (399 aa).

135–140 (GEGSTD) contacts ATP.

Belongs to the AdoMet synthase 2 family. Mg(2+) serves as cofactor.

It catalyses the reaction L-methionine + ATP + H2O = S-adenosyl-L-methionine + phosphate + diphosphate. It functions in the pathway amino-acid biosynthesis; S-adenosyl-L-methionine biosynthesis; S-adenosyl-L-methionine from L-methionine: step 1/1. Functionally, catalyzes the formation of S-adenosylmethionine from methionine and ATP. This chain is S-adenosylmethionine synthase (mat), found in Archaeoglobus fulgidus (strain ATCC 49558 / DSM 4304 / JCM 9628 / NBRC 100126 / VC-16).